We begin with the raw amino-acid sequence, 356 residues long: Isocitrate dehydrogenase [NAD] subunit 1, mitochondrial (356 aa).

Arg-106, Arg-137, and Asp-224 together coordinate substrate. Asp-224 is a Mg(2+) binding site.

Belongs to the isocitrate and isopropylmalate dehydrogenases family. Octamer of two non-identical subunits IDH1 and IDH2. It depends on Mg(2+) as a cofactor. Mn(2+) serves as cofactor.

It localises to the mitochondrion. The catalysed reaction is D-threo-isocitrate + NAD(+) = 2-oxoglutarate + CO2 + NADH. Functionally, performs an essential role in the oxidative function of the citric acid cycle. Also binds RNA; specifically to the 5'-untranslated leaders of mitochondrial mRNAs. The chain is Isocitrate dehydrogenase [NAD] subunit 1, mitochondrial (idh1) from Schizosaccharomyces pombe (strain 972 / ATCC 24843) (Fission yeast).